The sequence spans 389 residues: Chalcone synthase 4-1 (389 aa).

The active site involves Cys-164.

The protein belongs to the thiolase-like superfamily. Chalcone/stilbene synthases family.

The catalysed reaction is (E)-4-coumaroyl-CoA + 3 malonyl-CoA + 3 H(+) = 2',4,4',6'-tetrahydroxychalcone + 3 CO2 + 4 CoA. It participates in secondary metabolite biosynthesis; flavonoid biosynthesis. Functionally, the primary product of this enzyme is 4,2',4',6'-tetrahydroxychalcone (also termed naringenin-chalcone or chalcone) which can under specific conditions spontaneously isomerize into naringenin. The chain is Chalcone synthase 4-1 (CHS4-1) from Medicago sativa (Alfalfa).